The chain runs to 583 residues: Thiol:disulfide interchange protein DsbD (583 aa).

An N-terminal signal peptide occupies residues 1 to 18 (MRRLFLLLFMLFTTLAHA). Cystine bridges form between Cys-118–Cys-124 and Cys-186–Cys-306. The next 8 membrane-spanning stretches (helical) occupy residues 168–188 (GLGL…PCSL), 214–234 (SYVL…ALLG), 245–265 (WVLG…FGFF), 289–309 (LIGC…CMTA), 326–346 (FGGL…LLLV), 359–379 (WMNL…IYML), 382–402 (VLNP…VAYC), and 413–433 (LLHL…MLLV). Residues 458 to 581 (VTAHDAFTTV…FLQRWTQTRE (124 aa)) form the Thioredoxin domain. Residues Cys-496 and Cys-499 are joined by a disulfide bond.

This sequence belongs to the thioredoxin family. DsbD subfamily.

The protein localises to the cell inner membrane. The catalysed reaction is [protein]-dithiol + NAD(+) = [protein]-disulfide + NADH + H(+). It catalyses the reaction [protein]-dithiol + NADP(+) = [protein]-disulfide + NADPH + H(+). In terms of biological role, required to facilitate the formation of correct disulfide bonds in some periplasmic proteins and for the assembly of the periplasmic c-type cytochromes. Acts by transferring electrons from cytoplasmic thioredoxin to the periplasm. This transfer involves a cascade of disulfide bond formation and reduction steps. The protein is Thiol:disulfide interchange protein DsbD of Pseudomonas fluorescens (strain ATCC BAA-477 / NRRL B-23932 / Pf-5).